The primary structure comprises 732 residues: MSETSRTAFGGRRAVPPNNSNAAEDDLPTVELQGVVPRGVNLQEFLNVTSVHLFKERWDTNKVDHHTDKYENNKLIVRRGQSFYVQIDFSRPYDPRRDLFRVEYVIGRYPQENKGTYIPVPIVSELQSGKWGAKIVMREDRSVRLSIQSSPKCIVGKFRMYVAVWTPYGVLRTSRNPETDTYILFNPWCEDDAVYLDNEKEREEYVLNDIGVIFYGEVNDIKTRSWSYGQFEDGILDTCLYVMDRAQMDLSGRGNPIKVSRVGSAMVNAKDDEGVLVGSWDNIYAYGVPPSAWTGSVDILLEYRSSENPVRYGQCWVFAGVFNTFLRCLGIPARIVTNYFSAHDNDANLQMDIFLEEDGNVNSKLTKDSVWNYHCWNEAWMTRPDLPVGFGGWQAVDSTPQENSDGMYRCGPASVQAIKHGHVCFQFDAPFVFAEVNSDLIYITAKKDGTHVVENVDATHIGKLIVTKQIGGDGMMDITDTYKFQEGQEEERLALETALMYGAKKPLNTEGVMKSRSNVDMDFEVENAVLGKDFKLSITFRNNSHNRYTITAYLSANITFYTGVPKAEFKKETFDVTLEPLSFKKEAVLIQAGEYMGQLLEQASLHFFVTARINETRDVLAKQKSTVLTIPEIIIKVRGTQVVGSDMTVTVEFTNPLKETLRNVWVHLDGPGVTRPMKKMFREIRPNSTVQWEEVCRPWVSGHRKLIASMSSDSLRHVYGELDVQIQRRPSM.

The segment at 1-27 (MSETSRTAFGGRRAVPPNNSNAAEDDL) is disordered. S2 bears the N-acetylserine mark. A propeptide spans 2 to 38 (SETSRTAFGGRRAVPPNNSNAAEDDLPTVELQGVVPR) (activation peptide). Residues C315, H374, and D397 contribute to the active site. Positions 437, 439, 486, and 491 each coordinate Ca(2+). N-linked (GlcNAc...) asparagine glycosylation occurs at N614.

Belongs to the transglutaminase superfamily. Transglutaminase family. As to quaternary structure, tetramer of two A chains (F13A1) and two B (F13B) chains. Ca(2+) is required as a cofactor. The activation peptide is released by thrombin.

Its subcellular location is the cytoplasm. It is found in the secreted. It carries out the reaction L-glutaminyl-[protein] + L-lysyl-[protein] = [protein]-L-lysyl-N(6)-5-L-glutamyl-[protein] + NH4(+). Functionally, factor XIII is activated by thrombin and calcium ion to a transglutaminase that catalyzes the formation of gamma-glutamyl-epsilon-lysine cross-links between fibrin chains, thus stabilizing the fibrin clot. Also cross-link alpha-2-plasmin inhibitor, or fibronectin, to the alpha chains of fibrin. The sequence is that of Coagulation factor XIII A chain (F13A1) from Homo sapiens (Human).